Reading from the N-terminus, the 175-residue chain is Endoribonuclease YbeY (175 aa).

His121, His125, and His131 together coordinate Zn(2+). The segment at 154-175 (PDPYSPAQQESQAQPENTELNP) is disordered. Polar residues predominate over residues 159–175 (PAQQESQAQPENTELNP).

It belongs to the endoribonuclease YbeY family. Requires Zn(2+) as cofactor.

Its subcellular location is the cytoplasm. Single strand-specific metallo-endoribonuclease involved in late-stage 70S ribosome quality control and in maturation of the 3' terminus of the 16S rRNA. The sequence is that of Endoribonuclease YbeY from Alcanivorax borkumensis (strain ATCC 700651 / DSM 11573 / NCIMB 13689 / SK2).